We begin with the raw amino-acid sequence, 649 residues long: PTS system mannitol-specific EIICBA component (649 aa).

The PTS EIIC type-2 domain maps to 13-342 (FGRFLSNMVM…LLMKAQTSTE (330 aa)). The next 6 helical transmembrane spans lie at 25 to 46 (IGAFIAWGFITALFIPTGWVPN), 51 to 71 (SLVGPMITYLLPLLIGYTGGK), 135 to 156 (SAGIIGMLCAIIAFFLIGPFVK), 166 to 186 (VNFLVTAHLLPLTSIFVEPAK), 274 to 293 (AIAGGMTGVFTLTVFNAGLV), and 314 to 335 (LGVVCSIFAAAAVSFTVAALLM). The 92-residue stretch at 384–475 (QSIIVACDAG…LVTQLLAAKR (92 aa)) folds into the PTS EIIB type-2 domain. C390 functions as the Phosphocysteine intermediate; for EIIB activity in the catalytic mechanism. The residue at position 390 (C390) is a Phosphocysteine; by EIIA. Residues 504 to 646 (FQLQKENIHL…SDVLSILATS (143 aa)) enclose the PTS EIIA type-2 domain. Catalysis depends on H564, which acts as the Tele-phosphohistidine intermediate; for EIIA activity. H564 is subject to Phosphohistidine; by HPr.

Homodimer. An intramolecular phosphotransfer takes places between His-564 and Cys-390.

It is found in the cell inner membrane. The enzyme catalyses D-mannitol(out) + N(pros)-phospho-L-histidyl-[protein] = D-mannitol 1-phosphate(in) + L-histidyl-[protein]. The phosphoenolpyruvate-dependent sugar phosphotransferase system (sugar PTS), a major carbohydrate active transport system, catalyzes the phosphorylation of incoming sugar substrates concomitantly with their translocation across the cell membrane. This system is involved in D-mannitol transport. The polypeptide is PTS system mannitol-specific EIICBA component (mtlA) (Vibrio cholerae serotype O1 (strain ATCC 39315 / El Tor Inaba N16961)).